Reading from the N-terminus, the 313-residue chain is Porphobilinogen deaminase (313 aa).

Residue cysteine 241 is modified to S-(dipyrrolylmethanemethyl)cysteine.

It belongs to the HMBS family. In terms of assembly, monomer. Requires dipyrromethane as cofactor.

It catalyses the reaction 4 porphobilinogen + H2O = hydroxymethylbilane + 4 NH4(+). It participates in porphyrin-containing compound metabolism; protoporphyrin-IX biosynthesis; coproporphyrinogen-III from 5-aminolevulinate: step 2/4. Its pathway is porphyrin-containing compound metabolism; chlorophyll biosynthesis. Its function is as follows. Tetrapolymerization of the monopyrrole PBG into the hydroxymethylbilane pre-uroporphyrinogen in several discrete steps. This Chlorobium limicola (strain DSM 245 / NBRC 103803 / 6330) protein is Porphobilinogen deaminase.